A 376-amino-acid chain; its full sequence is Protein-glutamate methylesterase/protein-glutamine glutaminase (376 aa).

Positions 5–122 (KVLIVDDSAL…QHTFEDYTDE (118 aa)) constitute a Response regulatory domain. A 4-aspartylphosphate modification is found at Asp-56. Positions 185-376 (SKPSHKVIAL…PEKILALIKK (192 aa)) constitute a CheB-type methylesterase domain. Catalysis depends on residues Ser-197, His-223, and Asp-319.

This sequence belongs to the CheB family. In terms of processing, phosphorylated by CheA. Phosphorylation of the N-terminal regulatory domain activates the methylesterase activity.

The protein resides in the cytoplasm. The enzyme catalyses [protein]-L-glutamate 5-O-methyl ester + H2O = L-glutamyl-[protein] + methanol + H(+). It catalyses the reaction L-glutaminyl-[protein] + H2O = L-glutamyl-[protein] + NH4(+). In terms of biological role, involved in chemotaxis. Part of a chemotaxis signal transduction system that modulates chemotaxis in response to various stimuli. Catalyzes the demethylation of specific methylglutamate residues introduced into the chemoreceptors (methyl-accepting chemotaxis proteins or MCP) by CheR. Also mediates the irreversible deamidation of specific glutamine residues to glutamic acid. This Hydrogenovibrio crunogenus (strain DSM 25203 / XCL-2) (Thiomicrospira crunogena) protein is Protein-glutamate methylesterase/protein-glutamine glutaminase.